Here is a 396-residue protein sequence, read N- to C-terminus: Phosphopentomutase (396 aa).

The Mn(2+) site is built by Asp13, Asp288, His293, Asp329, His330, and His341.

Belongs to the phosphopentomutase family. Mn(2+) serves as cofactor.

It is found in the cytoplasm. The catalysed reaction is 2-deoxy-alpha-D-ribose 1-phosphate = 2-deoxy-D-ribose 5-phosphate. The enzyme catalyses alpha-D-ribose 1-phosphate = D-ribose 5-phosphate. Its pathway is carbohydrate degradation; 2-deoxy-D-ribose 1-phosphate degradation; D-glyceraldehyde 3-phosphate and acetaldehyde from 2-deoxy-alpha-D-ribose 1-phosphate: step 1/2. In terms of biological role, isomerase that catalyzes the conversion of deoxy-ribose 1-phosphate (dRib-1-P) and ribose 1-phosphate (Rib-1-P) to deoxy-ribose 5-phosphate (dRib-5-P) and ribose 5-phosphate (Rib-5-P), respectively. The protein is Phosphopentomutase of Clostridium botulinum (strain Alaska E43 / Type E3).